A 258-amino-acid chain; its full sequence is Short-chain dehydrogenase chyC (258 aa).

NADP(+) contacts are provided by Arg37, Asp55, Asn81, Tyr154, Lys158, Val185, and Thr187. Residue Tyr154 is the Proton donor of the active site. Lys158 functions as the Lowers pKa of active site Tyr in the catalytic mechanism.

The protein belongs to the short-chain dehydrogenases/reductases (SDR) family.

Its function is as follows. Short-chain dehydrogenase; part of the gene cluster that mediates the biosynthesis of the yellow pigment chrysogine. the NRPS chyA mediates the condensation of anthranilic acid and alanine into the intermediate 2-(2-aminopropanamido)benzoic acid. The remainder of the pathway is highly branched yielding at least 13 chrysogine-related compounds. The malonyl transferase chyE converts 2-(2-aminopropanamido)benzoic acid and 2-(2-aminopropanamido)benzamidine into 2-(2-(2-carboxyacetamido)propanamido)benzoic acid and 3-((1-((2-carbamoylphenyl)amino)-1-oxopropan-2-yl)amino)-3-oxopropanoic acid, respectively. ChyD is an amidase, being responsible for the amidation of the carboxylic acid moiety of 2-(2-aminopropanamido)benzoic acid, 2-(2-(2-carboxyacetamido)propanamido)benzoic acid and 2-(2-((4-amino-1-carboxy-4-oxobutyl)amino)propanamido)benzoic acid. ChyC is involved in the same reactions as ChyD, but plays a more minor role in the amidation reactions compared to chyD. The oxidoreductases chyH and chyM are involved in oxidation reactions that form N-pyruvoylanthranilamide from 2-(2-aminopropanamido)benzamidine and (1-((2-carbamoylphenyl)amino)-1-oxopropan-2-yl)glutamine, respectively. N-pyruvoylanthranilamide is further converted via two further branches in the pathway, yielding chrysogine and additional chrysogine-related coumpounds. Chrysogine is likely formed by a spontaneous ring closure from N-pyruvoylanthranilamide. This chain is Short-chain dehydrogenase chyC, found in Penicillium rubens (strain ATCC 28089 / DSM 1075 / NRRL 1951 / Wisconsin 54-1255) (Penicillium chrysogenum).